Here is a 1001-residue protein sequence, read N- to C-terminus: 26S proteasome non-ATPase regulatory subunit 1 homolog B (1001 aa).

Position 2 is an N-acetylalanine (A2). Residue K166 forms a Glycyl lysine isopeptide (Lys-Gly) (interchain with G-Cter in ubiquitin) linkage. PC repeat units follow at residues 412-447 (SATA…GGSP), 452-485 (GALY…EVIQ), 487-521 (GACL…VAGE), 522-555 (AAGI…EKII), 557-590 (GLAL…IIRY), 591-626 (GGMY…DVRR), 627-659 (TAVL…PHVR), 661-695 (GAAL…FVRQ), 696-736 (GALI…DTMS), and 739-771 (GAIL…TAVI). Disordered regions lie at residues 853-896 (AKKE…TVEK) and 954-1001 (SLTD…YASP). The segment covering 854–863 (KKEAEQKAKA) has biased composition (basic and acidic residues). Residue S889 is modified to Phosphoserine. Positions 961 to 985 (STASPAVGAEAAGQAQQAATTSAMA) are enriched in low complexity.

This sequence belongs to the proteasome subunit S1 family. As to quaternary structure, component of the 19S regulatory particle (RP/PA700) base subcomplex of the 26S proteasome. The 26S proteasome is composed of a core protease (CP), known as the 20S proteasome, capped at one or both ends by the 19S regulatory particle (RP/PA700). The RP/PA700 complex is composed of at least 17 different subunits in two subcomplexes, the base and the lid, which form the portions proximal and distal to the 20S proteolytic core, respectively.

Acts as a regulatory subunit of the 26 proteasome which is involved in the ATP-dependent degradation of ubiquitinated proteins. This chain is 26S proteasome non-ATPase regulatory subunit 1 homolog B (RPN2B), found in Arabidopsis thaliana (Mouse-ear cress).